Here is a 214-residue protein sequence, read N- to C-terminus: Protein verrocchio (214 aa).

As to quaternary structure, probably homomultimerizes. Component of the MTV complex, composed of moi/modigliani, tea and ver/verrocchio. Interacts with moi/modigliani and tea (via C-terminus); the interactions are direct and require fully intact moi/modigliani and ver/verrocchio. The MTV complex is recruited to telomeres by the HipHop-HOAP complex, consisting of HipHop, cav/HOAP and Su(var)205/HP1 to form the terminin telomere-capping complex. Interacts with cav/HOAP; the interaction is direct. Interacts with Su(var)205/HP1; the interaction is indirect and probably requires cav/HOAP or moi/modigliani. Probably interacts with peo (via N-terminus and UBC domain).

The protein resides in the nucleus. Its subcellular location is the chromosome. The protein localises to the telomere. Functionally, part of the MTV complex that associates with the HipHop-HOAP complex to form the terminin telomere-capping complex involved in telomere maintenance and prevention of telomere fusion. As part of the MTV complex binds single stranded DNA in a sequence-independent manner, protecting it from degradation. The polypeptide is Protein verrocchio (Drosophila melanogaster (Fruit fly)).